The primary structure comprises 331 residues: Anthranilate phosphoribosyltransferase (331 aa).

Residues Gly-79, 82–83 (GD), Thr-87, 89–92 (NIST), 107–115 (KHGNYGATS), and Ala-119 each bind 5-phospho-alpha-D-ribose 1-diphosphate. Gly-79 serves as a coordination point for anthranilate. Mg(2+) is bound at residue Ser-91. Asn-110 serves as a coordination point for anthranilate. Arg-165 is an anthranilate binding site. Asp-223 and Glu-224 together coordinate Mg(2+).

Belongs to the anthranilate phosphoribosyltransferase family. As to quaternary structure, homodimer. It depends on Mg(2+) as a cofactor.

It catalyses the reaction N-(5-phospho-beta-D-ribosyl)anthranilate + diphosphate = 5-phospho-alpha-D-ribose 1-diphosphate + anthranilate. It participates in amino-acid biosynthesis; L-tryptophan biosynthesis; L-tryptophan from chorismate: step 2/5. Catalyzes the transfer of the phosphoribosyl group of 5-phosphorylribose-1-pyrophosphate (PRPP) to anthranilate to yield N-(5'-phosphoribosyl)-anthranilate (PRA). The sequence is that of Anthranilate phosphoribosyltransferase from Bacteroides fragilis (strain YCH46).